Here is a 129-residue protein sequence, read N- to C-terminus: MGSNVSSVHDVHSSMEITSNGFVVEIESRRQWKSLFDSMKGSNKLLVIDFTAVWCGPCKAMEPRVREIASKYSEAVFARVDVDRLMDVAGTYRAITLPAFVFVKRGEEIDRVVGAKPDELVKKIEQHRV.

The Thioredoxin domain maps to 6–129; sequence SSVHDVHSSM…LVKKIEQHRV (124 aa). Active-site nucleophile residues include Cys-55 and Cys-58. An intrachain disulfide couples Cys-55 to Cys-58.

The protein belongs to the thioredoxin family. Plant H-type subfamily.

Its subcellular location is the cytoplasm. Functionally, probable thiol-disulfide oxidoreductase that may be involved in the redox regulation of a number of cytosolic enzymes. This Arabidopsis thaliana (Mouse-ear cress) protein is Thioredoxin H7 (TRX7).